Reading from the N-terminus, the 970-residue chain is Vacuolar membrane protease (970 aa).

The segment covering methionine 1–arginine 12 has biased composition (polar residues). The tract at residues methionine 1–proline 35 is disordered. Over methionine 1–lysine 56 the chain is Cytoplasmic. Over residues proline 25–proline 35 the composition is skewed to basic and acidic residues. A helical transmembrane segment spans residues threonine 57–aspartate 77. At serine 78–glycine 397 the chain is on the vacuolar side. N-linked (GlcNAc...) asparagine glycosylation is found at asparagine 146 and asparagine 173. Histidine 187 and aspartate 199 together coordinate Zn(2+). Glutamate 234 serves as the catalytic Proton acceptor. Residues glutamate 235, glutamate 260, and histidine 333 each coordinate Zn(2+). The chain crosses the membrane as a helical span at residues valine 398–phenylalanine 418. Residues alanine 419–tryptophan 423 are Cytoplasmic-facing. The chain crosses the membrane as a helical span at residues serine 424–leucine 444. Residues aspartate 445 to glycine 465 lie on the Vacuolar side of the membrane. Residues asparagine 446 and asparagine 461 are each glycosylated (N-linked (GlcNAc...) asparagine). The chain crosses the membrane as a helical span at residues isoleucine 466 to isoleucine 486. Residues asparagine 487–leucine 502 are Cytoplasmic-facing. The helical transmembrane segment at valine 503 to isoleucine 523 threads the bilayer. Topologically, residues alanine 524 to glutamate 535 are vacuolar. The chain crosses the membrane as a helical span at residues phenylalanine 536 to tryptophan 556. Residues leucine 557 to serine 620 are Cytoplasmic-facing. A helical transmembrane segment spans residues isoleucine 621 to isoleucine 641. Over leucine 642–leucine 658 the chain is Vacuolar. Residues valine 659–phenylalanine 679 traverse the membrane as a helical segment. Residues lysine 680–arginine 683 lie on the Cytoplasmic side of the membrane. The helical transmembrane segment at isoleucine 684–glutamate 704 threads the bilayer. The Vacuolar segment spans residues proline 705–valine 970. N-linked (GlcNAc...) asparagine glycosylation is found at asparagine 738, asparagine 797, and asparagine 877.

This sequence belongs to the peptidase M28 family. Requires Zn(2+) as cofactor.

It localises to the vacuole membrane. Its function is as follows. May be involved in vacuolar sorting and osmoregulation. The chain is Vacuolar membrane protease from Meyerozyma guilliermondii (strain ATCC 6260 / CBS 566 / DSM 6381 / JCM 1539 / NBRC 10279 / NRRL Y-324) (Yeast).